The sequence spans 463 residues: Tryptophan aminotransferase-related protein 4 (463 aa).

The helical transmembrane segment at 6–26 (LLLIVSIILNLVFTIHILYYS) threads the bilayer. Pyridoxal 5'-phosphate-binding positions include tyrosine 124, 163–164 (TT), asparagine 239, 259–262 (DYAY), 282–285 (SLSK), and arginine 293. Lysine 285 carries the N6-(pyridoxal phosphate)lysine modification.

Belongs to the alliinase family. The cofactor is pyridoxal 5'-phosphate.

Its subcellular location is the membrane. Probable aminotransferase. This chain is Tryptophan aminotransferase-related protein 4 (TAR4), found in Arabidopsis thaliana (Mouse-ear cress).